We begin with the raw amino-acid sequence, 142 residues long: MAKKVQAYIKLQVAAGQANPSPPVGPALGQHGVNIMEFCKAFNAQTQQLDAGAPVPVVITVYNDRSFTFTMKTPPAAYLLKKAAGIKSGSGEPNTKKVGKVTRAQLEEIAKAKEPDLTAADMDAAVRTIAGSARSMGLDVEG.

The protein belongs to the universal ribosomal protein uL11 family. Part of the ribosomal stalk of the 50S ribosomal subunit. Interacts with L10 and the large rRNA to form the base of the stalk. L10 forms an elongated spine to which L12 dimers bind in a sequential fashion forming a multimeric L10(L12)X complex. In terms of processing, one or more lysine residues are methylated.

In terms of biological role, forms part of the ribosomal stalk which helps the ribosome interact with GTP-bound translation factors. The chain is Large ribosomal subunit protein uL11 from Alcanivorax borkumensis (strain ATCC 700651 / DSM 11573 / NCIMB 13689 / SK2).